The primary structure comprises 449 residues: tRNA-2-methylthio-N(6)-dimethylallyladenosine synthase (449 aa).

Positions 4 to 119 (RTFHIETFGC…APQALDRLVE (116 aa)) constitute an MTTase N-terminal domain. Cys13, Cys48, Cys82, Cys158, Cys162, and Cys165 together coordinate [4Fe-4S] cluster. The region spanning 144–375 (GAVPASVFVN…QTLQNRLTER (232 aa)) is the Radical SAM core domain. The TRAM domain maps to 378-446 (QDMVGRKVEV…KHSLLAEQAG (69 aa)).

The protein belongs to the methylthiotransferase family. MiaB subfamily. In terms of assembly, monomer. The cofactor is [4Fe-4S] cluster.

It is found in the cytoplasm. The enzyme catalyses N(6)-dimethylallyladenosine(37) in tRNA + (sulfur carrier)-SH + AH2 + 2 S-adenosyl-L-methionine = 2-methylsulfanyl-N(6)-dimethylallyladenosine(37) in tRNA + (sulfur carrier)-H + 5'-deoxyadenosine + L-methionine + A + S-adenosyl-L-homocysteine + 2 H(+). In terms of biological role, catalyzes the methylthiolation of N6-(dimethylallyl)adenosine (i(6)A), leading to the formation of 2-methylthio-N6-(dimethylallyl)adenosine (ms(2)i(6)A) at position 37 in tRNAs that read codons beginning with uridine. The protein is tRNA-2-methylthio-N(6)-dimethylallyladenosine synthase of Nitratidesulfovibrio vulgaris (strain ATCC 29579 / DSM 644 / CCUG 34227 / NCIMB 8303 / VKM B-1760 / Hildenborough) (Desulfovibrio vulgaris).